The primary structure comprises 588 residues: Transcription factor tau 60 kDa subunit (588 aa).

The segment at 399–588 (LPKLPENFSM…VYCGTTLEVM (190 aa)) is sufficient for SPT15-binding.

In terms of assembly, heterodimer with TFC6. Component of the TFIIIC complex composed of TFC1, TFC3, TFC4, TFC6, TFC7 and TFC8. The subunits are organized in two globular domains, tauA and tauB, connected by a proteolysis-sensitive and flexible linker. Interacts with SPT15 and directly with TFC6.

It localises to the nucleus. TFIIIC mediates tRNA and 5S RNA gene activation by binding to intragenic promoter elements. Upstream of the transcription start site, TFIIIC assembles the initiation complex TFIIIB-TFIIIC-tDNA, which is sufficient for RNA polymerase III recruitment and function. Part of the tauB domain of TFIIIC that binds boxB DNA promoter sites of tRNA and similar genes. Plays a role in TFIIB assembly through its interaction with SPT15/TBP. Essential for cell viability. This Saccharomyces cerevisiae (strain ATCC 204508 / S288c) (Baker's yeast) protein is Transcription factor tau 60 kDa subunit (TFC8).